A 128-amino-acid polypeptide reads, in one-letter code: Ribonuclease P protein component (128 aa).

Belongs to the RnpA family. In terms of assembly, consists of a catalytic RNA component (M1 or rnpB) and a protein subunit.

The enzyme catalyses Endonucleolytic cleavage of RNA, removing 5'-extranucleotides from tRNA precursor.. RNaseP catalyzes the removal of the 5'-leader sequence from pre-tRNA to produce the mature 5'-terminus. It can also cleave other RNA substrates such as 4.5S RNA. The protein component plays an auxiliary but essential role in vivo by binding to the 5'-leader sequence and broadening the substrate specificity of the ribozyme. This chain is Ribonuclease P protein component, found in Rhizobium meliloti (strain 1021) (Ensifer meliloti).